The chain runs to 883 residues: Receptor-like protein 40 (883 aa).

A signal peptide spans Met-1–Pro-21. Over Ser-22–Ala-846 the chain is Extracellular. Residues Asn-58, Asn-91, and Asn-109 are each glycosylated (N-linked (GlcNAc...) asparagine). LRR repeat units follow at residues Phe-97 to Met-121 and Leu-122 to Phe-143. A glycan (N-linked (GlcNAc...) asparagine) is linked at Asn-145. LRR repeat units follow at residues Leu-146–Leu-169, Arg-170–Leu-195, His-197–Asn-219, Leu-220–Leu-244, Gln-246–Leu-267, Thr-268–Met-291, Phe-293–Ser-316, Ser-317–Leu-340, Asn-342–Ser-364, Leu-365–Pro-390, Ser-391–Thr-412, Leu-413–Leu-437, Arg-439–Asn-462, and Ser-463–Ile-486. N-linked (GlcNAc...) asparagine glycosylation is found at Asn-189, Asn-207, Asn-243, and Asn-266. N-linked (GlcNAc...) asparagine glycosylation is found at Asn-305 and Asn-312. Asn-352 carries an N-linked (GlcNAc...) asparagine glycan. An N-linked (GlcNAc...) asparagine glycan is attached at Asn-462. Residues Asn-487–Asn-506 form an LRR 17; degenerate repeat. 2 N-linked (GlcNAc...) asparagine glycosylation sites follow: Asn-506 and Asn-519. 10 LRR repeats span residues Arg-507–Leu-528, Ser-529–Asp-552, Pro-554–Cys-576, Ala-578–Leu-600, Pro-601–Pro-624, Phe-627–Asn-651, Thr-701–Leu-724, Lys-725–Asn-747, Leu-748–Leu-772, and Phe-774–Gly-797. N-linked (GlcNAc...) asparagine glycosylation is present at Asn-575. N-linked (GlcNAc...) asparagine glycosylation occurs at Asn-731. An N-linked (GlcNAc...) asparagine glycan is attached at Asn-779. Residues Val-847–Leu-867 traverse the membrane as a helical segment. The Cytoplasmic segment spans residues Tyr-868–Cys-883.

It belongs to the RLP family.

The protein resides in the cell membrane. The chain is Receptor-like protein 40 from Arabidopsis thaliana (Mouse-ear cress).